Here is a 481-residue protein sequence, read N- to C-terminus: G-protein coupled receptor 37-like 1 (481 aa).

Residues 1-24 (MRWLWPLAVSLAVVLAVGPSEVSG) form the signal peptide. Residues 25–134 (AATLSLGGHR…ESSYSAYAVM (110 aa)) are Extracellular-facing. 2 disordered regions span residues 30-55 (LGGH…GPKE) and 76-107 (LQPT…TNLT). A compositionally biased stretch (polar residues) spans 95-107 (TSESGQELRTNLT). Asn-105 carries an N-linked (GlcNAc...) asparagine glycan. The chain crosses the membrane as a helical span at residues 135–155 (LLALVVFAVGIVGNLSVMCIV). Residues 156–167 (WHSYYLKSAWNS) are Cytoplasmic-facing. The chain crosses the membrane as a helical span at residues 168 to 188 (ILASLALWDFLVLFFCLPIVI). Over 189–205 (FNEITKQRLLGDVSCRA) the chain is Extracellular. An intrachain disulfide couples Cys-203 to Cys-286. A helical membrane pass occupies residues 206–226 (VPFMEVSSLGVTTFSLCALGI). The Cytoplasmic portion of the chain corresponds to 227–251 (DRFHVATSTLPKVRPIERCQSILAK). The helical transmembrane segment at 252-272 (LAVIWVGSMMLAVPELLLWQL) threads the bilayer. The Extracellular segment spans residues 273–310 (AQEPTPTMGTVDSCIMKPSADLPESLYSLVMTYQNARM). Residues 311–331 (WWYFGCYFCLPILFTVTCQLV) form a helical membrane-spanning segment. Residues 332–360 (TWRVRGPPGRKPECRAGRHEQCESQLNST) are Cytoplasmic-facing. Residues 361 to 381 (VVGLTVVYAFCTLPENICNIV) form a helical membrane-spanning segment. The Extracellular segment spans residues 382 to 398 (VAYLSTELTRQTLDLLG). A helical membrane pass occupies residues 399–419 (LINQFSTFFKGAITPVLLLCI). Residues 420–481 (CRPLGQAFLD…PPLLPLGTPC (62 aa)) are Cytoplasmic-facing. Ser-471 is subject to Phosphoserine. The residue at position 479 (Thr-479) is a Phosphothreonine.

The protein belongs to the G-protein coupled receptor 1 family. In terms of assembly, interacts with the PTCH1 receptor. Post-translationally, undergoes metalloprotease-mediated cleavage which reduces its constitutive activity. Ubiquitinated. In terms of tissue distribution, highly expressed in brain.

The protein localises to the cell membrane. It localises to the cell projection. It is found in the cilium membrane. Functionally, G-protein coupled receptor. Has been shown to bind the neuroprotective and glioprotective factor prosaposin (PSAP), leading to endocytosis followed by an ERK phosphorylation cascade. However, other studies have shown that prosaposin does not increase activity. It has been suggested that GPR37L1 is a constitutively active receptor which signals through the guanine nucleotide-binding protein G(s) subunit alpha. Participates in the regulation of postnatal cerebellar development by modulating the Shh pathway. Regulates baseline blood pressure in females and protects against cardiovascular stress in males. Mediates inhibition of astrocyte glutamate transporters and reduction in neuronal N-methyl-D-aspartate receptor activity. The chain is G-protein coupled receptor 37-like 1 (Gpr37l1) from Rattus norvegicus (Rat).